The primary structure comprises 49 residues: uncharacterized protein (49 aa).

Residues 8 to 28 traverse the membrane as a helical segment; the sequence is FFLFSSGVLQATTLLLVILIF.

It localises to the cell membrane. This is an uncharacterized protein from Bacillus subtilis (strain 168).